The following is a 1177-amino-acid chain: Phospholipid-transporting ATPase IF (1177 aa).

The Cytoplasmic portion of the chain corresponds to 1-55 (MWRWIRQQLGFDPPHQSDTRTIYVANRFPQNGLYTPQKFIDNRIISSKYTVWNFV). The chain crosses the membrane as a helical span at residues 56 to 77 (PKNLFEQFRRVANFYFLIIFLV). Residues 78-82 (QLMID) lie on the Extracellular side of the membrane. Residues 83-104 (TPTSPVTSGLPLFFVITVTAIK) form a helical membrane-spanning segment. Residues 105–289 (QGYEDWLRHN…SAVEKSMNTF (185 aa)) are Cytoplasmic-facing. Residues 290 to 311 (LIIYLVILISEAVISTILKYTW) traverse the membrane as a helical segment. Topologically, residues 312 to 341 (QAEEKWDEPWYNQKTEHQRNSSKILRFISD) are extracellular. The chain crosses the membrane as a helical span at residues 342–359 (FLAFLVLYNFIIPISLYV). Topologically, residues 360-876 (TVEMQKFLGS…HGHFYYIRIA (517 aa)) are cytoplasmic. The active-site 4-aspartylphosphate intermediate is the aspartate 407. Residues aspartate 407, lysine 408, threonine 409, glutamate 531, phenylalanine 572, lysine 595, arginine 626, threonine 706, glycine 707, aspartate 708, arginine 794, and lysine 800 each contribute to the ATP site. A Mg(2+)-binding site is contributed by aspartate 407. Position 409 (threonine 409) interacts with Mg(2+). Aspartate 821 contributes to the Mg(2+) binding site. Positions 824 and 825 each coordinate ATP. A Mg(2+)-binding site is contributed by aspartate 825. A helical transmembrane segment spans residues 877-898 (TLVQYFFYKNVCFITPQFLYQF). Over 899–910 (YCLFSQQTLYDS) the chain is Extracellular. The chain crosses the membrane as a helical span at residues 911–930 (VYLTLYNICFTSLPILIYSL). Topologically, residues 931–960 (LEQHVDPHVLQNKPTLYRDISKNRLLSIKT) are cytoplasmic. The chain crosses the membrane as a helical span at residues 961–982 (FLYWTILGFSHAFIFFFGSYLL). The Extracellular portion of the chain corresponds to 983–997 (IGKDTSLLGNGQMFG). A helical transmembrane segment spans residues 998 to 1020 (NWTFGTLVFTVMVITVTVKMALE). Residues 1021–1025 (THFWT) are Cytoplasmic-facing. A helical membrane pass occupies residues 1026 to 1047 (WINHLVTWGSIIFYFVFSLFYG). Residues 1048 to 1065 (GILWPFLGSQNMYFVFIQ) lie on the Extracellular side of the membrane. The chain crosses the membrane as a helical span at residues 1066 to 1090 (LLSSGSAWFAIILMVVTCLFLDIIK). Over 1091–1177 (KVFDRHLHPT…TLSTMDSSTC (87 aa)) the chain is Cytoplasmic. Serine 1154 is modified (phosphoserine).

It belongs to the cation transport ATPase (P-type) (TC 3.A.3) family. Type IV subfamily. In terms of assembly, component of a P4-ATPase flippase complex which consists of a catalytic alpha subunit ATP11B and an accessory beta subunit TMEM30A. It depends on Mg(2+) as a cofactor.

It localises to the recycling endosome membrane. The protein resides in the early endosome. Its subcellular location is the endoplasmic reticulum. The protein localises to the golgi apparatus. It is found in the trans-Golgi network. The catalysed reaction is ATP + H2O + phospholipidSide 1 = ADP + phosphate + phospholipidSide 2.. It carries out the reaction a 1,2-diacyl-sn-glycero-3-phospho-L-serine(out) + ATP + H2O = a 1,2-diacyl-sn-glycero-3-phospho-L-serine(in) + ADP + phosphate + H(+). The enzyme catalyses a 1,2-diacyl-sn-glycero-3-phosphoethanolamine(out) + ATP + H2O = a 1,2-diacyl-sn-glycero-3-phosphoethanolamine(in) + ADP + phosphate + H(+). With respect to regulation, the ATPase activity is up-regulated by aminophospholipids PS and PE. Catalytic component of a P4-ATPase flippase complex which catalyzes the hydrolysis of ATP coupled to the transport of aminophospholipids, phosphatidylserines (PS) and phosphatidylethanolamines (PE), from the outer to the inner leaflet of intracellular membranes. May contribute to the maintenance of membrane lipid asymmetry in endosome compartment. The polypeptide is Phospholipid-transporting ATPase IF (ATP11B) (Homo sapiens (Human)).